The primary structure comprises 766 residues: Tetratricopeptide repeat protein 14 (766 aa).

A disordered region spans residues 35 to 55 (LGTAAEPARGAAPPPGAGRKE). One can recognise an S1 motif domain in the interval 125 to 207 (GDIVIGRISS…YHEKLAVSLY (83 aa)). TPR repeat units lie at residues 209 to 242 (SSLP…NSNS), 306 to 339 (ALKC…DKQN), 341 to 373 (EALV…CPTH), and 381 to 414 (CQTL…DETF). Residues 463–743 (EEKRLKKKRR…PDSRVKKNLP (281 aa)) are disordered. The segment covering 475 to 496 (SSSSSVSSADESVSSSSSSSSS) has biased composition (low complexity). Residues 497-506 (SHKRHKKSKR) are compositionally biased toward basic residues. Residues 539–550 (PTNTSASFLNQK) are compositionally biased toward polar residues. Basic and acidic residues predominate over residues 551 to 562 (QEVEKLLEKQDR). The segment covering 594 to 605 (FYNSYKTQAGSS) has biased composition (polar residues). 2 stretches are compositionally biased toward basic and acidic residues: residues 606 to 616 (KTEKPYKSERH) and 629 to 657 (NSED…RRWE). Polar residues predominate over residues 661-673 (VKYSTSPASSDYS). S666 carries the post-translational modification Phosphoserine. The span at 707–738 (RVYEKEDSCGEGNRNEAPEEMLNSKEQPDSRV) shows a compositional bias: basic and acidic residues.

Belongs to the TTC14 family.

The polypeptide is Tetratricopeptide repeat protein 14 (Mus musculus (Mouse)).